The chain runs to 178 residues: MDLLLLLFSAIWYILPAYVANAVPCILGGGRPVDLGKNFFDGNRIIGNGVTYRGTFFGILFGIITGILQHFIVILYMDPQSVFNYGLTGYIILGFLLGTGALFGDMLGSFIKRRLKLNQGQSAPLLDQMTFIVFALIFAYPLYQQPVNLMVILLVISPIIHFSSNIIAYKLHLKKVWW.

A run of 5 helical transmembrane segments spans residues 3-23 (LLLL…ANAV), 56-76 (FFGI…VILY), 91-111 (IILG…GSFI), 123-143 (APLL…YPLY), and 149-169 (LMVI…IIAY).

This sequence belongs to the CDP-archaeol synthase family. Mg(2+) serves as cofactor.

It is found in the cell membrane. The enzyme catalyses 2,3-bis-O-(geranylgeranyl)-sn-glycerol 1-phosphate + CTP + H(+) = CDP-2,3-bis-O-(geranylgeranyl)-sn-glycerol + diphosphate. The protein operates within membrane lipid metabolism; glycerophospholipid metabolism. Functionally, catalyzes the formation of CDP-2,3-bis-(O-geranylgeranyl)-sn-glycerol (CDP-archaeol) from 2,3-bis-(O-geranylgeranyl)-sn-glycerol 1-phosphate (DGGGP) and CTP. This reaction is the third ether-bond-formation step in the biosynthesis of archaeal membrane lipids. The sequence is that of CDP-archaeol synthase from Methanococcus maripaludis (strain C7 / ATCC BAA-1331).